The following is a 248-amino-acid chain: DNA polymerase sliding clamp 2 (248 aa).

Belongs to the PCNA family. In terms of assembly, homotrimer. The subunits circularize to form a toroid; DNA passes through its center. Replication factor C (RFC) is required to load the toroid on the DNA.

In terms of biological role, sliding clamp subunit that acts as a moving platform for DNA processing. Responsible for tethering the catalytic subunit of DNA polymerase and other proteins to DNA during high-speed replication. The polypeptide is DNA polymerase sliding clamp 2 (Sulfurisphaera ohwakuensis).